The chain runs to 371 residues: Partitioning defective 6 homolog beta (371 aa).

Residues Ser-10 and Ser-11 each carry the phosphoserine modification. Residues 16–96 (TMEVKSKFGA…PLLRIFIQKK (81 aa)) form the PB1 domain. Positions 126 to 253 (RKKPHIVISM…ITVRPANQRN (128 aa)) are interaction with PARD3 and CDC42. One can recognise a Pseudo-CRIB domain in the interval 133 to 150 (ISMPQDFRPVSSIIDVDI). Residues 157–250 (RVRLYKYGTE…NLIITVRPAN (94 aa)) form the PDZ domain. Disordered stretches follow at residues 253–273 (NNVV…DNSL) and 326–371 (FESG…IITL). Positions 326–340 (FESGQNGFSPPQDTS) are enriched in polar residues. Positions 352–363 (LESRAPDQKLLE) are enriched in basic and acidic residues.

It belongs to the PAR6 family. In terms of assembly, interacts with PARD3. Interacts with GTP-bound forms of CDC42, RHOQ/TC10 and RAC1. Interacts with the N-terminal part of PRKCI and PRKCZ. Part of a complex with PARD3, CDC42 or RAC1 and PRKCI or PRKCZ. Part of a complex with LLGL1 and PRKCI. Interacts with ALS2CR19. Interacts with ECT2. Interacts with PALS1. Expressed in pancreas and in both adult and fetal kidney. Weakly expressed in placenta and lung. Not expressed in other tissues.

The protein localises to the cytoplasm. The protein resides in the cell membrane. It localises to the cell junction. Its subcellular location is the tight junction. Adapter protein involved in asymmetrical cell division and cell polarization processes. Probably involved in formation of epithelial tight junctions. Association with PARD3 may prevent the interaction of PARD3 with F11R/JAM1, thereby preventing tight junction assembly. The PARD6-PARD3 complex links GTP-bound Rho small GTPases to atypical protein kinase C proteins. This Mus musculus (Mouse) protein is Partitioning defective 6 homolog beta (Pard6b).